The chain runs to 56 residues: Frontoxin I (56 aa).

Cystine bridges form between C3/C22, C17/C39, C41/C52, and C53/C56.

Belongs to the three-finger toxin family. Short-chain subfamily. Type I alpha-neurotoxin sub-subfamily. As to expression, expressed by the venom gland.

The protein localises to the secreted. Functionally, binds to muscle nicotinic acetylcholine receptor (nAChR) and inhibit acetylcholine from binding to the receptor, thereby impairing neuromuscular transmission. The sequence is that of Frontoxin I from Micrurus frontalis (Coral snake).